An 812-amino-acid polypeptide reads, in one-letter code: Fibrous sheath CABYR-binding protein (812 aa).

The disordered stretch occupies residues 1 to 66 (MEESDEPEQP…SIGNIPGGKA (66 aa)). Phosphoserine occurs at positions 25, 57, 125, 133, 184, and 273. 4 disordered regions span residues 269–333 (IQAP…PKGT), 367–388 (DSGR…PPLS), 424–547 (FEDQ…PPSL), and 672–741 (PAEE…PSVK). The span at 275–286 (AKETSAAETTAK) shows a compositional bias: low complexity. The span at 488–501 (EVPPLPTEEWPLPP) shows a compositional bias: pro residues. Positions 502-513 (VTEESPAEVTPP) are enriched in low complexity. Acidic residues predominate over residues 514-528 (ETEEGPIEPAEEGPE).

As to quaternary structure, interacts with CABYR.

It is found in the cell projection. The protein resides in the cilium. It localises to the flagellum. Its function is as follows. May be involved in the later stages of fibrous sheath biogenesis. Binds calcium. In Rattus norvegicus (Rat), this protein is Fibrous sheath CABYR-binding protein.